A 436-amino-acid polypeptide reads, in one-letter code: Histidinol dehydrogenase (436 aa).

NAD(+)-binding residues include Y135, Q196, and N219. 3 residues coordinate substrate: S242, Q264, and H267. Positions 264 and 267 each coordinate Zn(2+). Residues E332 and H333 each act as proton acceptor in the active site. Substrate-binding residues include H333, D366, E420, and H425. D366 lines the Zn(2+) pocket. H425 provides a ligand contact to Zn(2+).

Belongs to the histidinol dehydrogenase family. It depends on Zn(2+) as a cofactor.

It carries out the reaction L-histidinol + 2 NAD(+) + H2O = L-histidine + 2 NADH + 3 H(+). Its pathway is amino-acid biosynthesis; L-histidine biosynthesis; L-histidine from 5-phospho-alpha-D-ribose 1-diphosphate: step 9/9. Catalyzes the sequential NAD-dependent oxidations of L-histidinol to L-histidinaldehyde and then to L-histidine. In Methylococcus capsulatus (strain ATCC 33009 / NCIMB 11132 / Bath), this protein is Histidinol dehydrogenase.